A 387-amino-acid polypeptide reads, in one-letter code: MVMILIKLEIDRRAYNSIKNFSRLVYTKAIKNRGDLPKKEEIVTLTYNGKFVAKALYNPKSVILKILTTEDEEIDYDFFYKRIFNAKIYRENILNYKNTYRWIYAEGDELPTIIFDKYNELGAMQLMSKLIEKEYLKDIVDILFELSDLETIYVKRGKKGERIRDKIFGDKNKFETVIKEGDAKFKVNVRGHKTGFFLDQRENRLYLEKFIKEGDRVLDICCYTGGFSVHAAIRGAEVVGVDLSKKALKLAEENIELNNIPKDRYEFIEGNAFEVMKEMIEDKEKFDVVILDPPAFTQTEDDIKNALRAYASLNYLGIKLAKRIFVTCSCSHHVDKEMFKRTVISSAFRAKKELIMIDYKGQAPDHPISIGNKNLEYLKCIFFYVKN.

Residues 5–81 (LIKLEIDRRA…EEIDYDFFYK (77 aa)) form the PUA domain.

Belongs to the methyltransferase superfamily. RlmI family.

The protein localises to the cytoplasm. This chain is Putative ribosomal RNA large subunit methyltransferase MJ1649, found in Methanocaldococcus jannaschii (strain ATCC 43067 / DSM 2661 / JAL-1 / JCM 10045 / NBRC 100440) (Methanococcus jannaschii).